We begin with the raw amino-acid sequence, 957 residues long: Glycine dehydrogenase (decarboxylating) (957 aa).

Lys708 is subject to N6-(pyridoxal phosphate)lysine.

It belongs to the GcvP family. As to quaternary structure, the glycine cleavage system is composed of four proteins: P, T, L and H. It depends on pyridoxal 5'-phosphate as a cofactor.

It carries out the reaction N(6)-[(R)-lipoyl]-L-lysyl-[glycine-cleavage complex H protein] + glycine + H(+) = N(6)-[(R)-S(8)-aminomethyldihydrolipoyl]-L-lysyl-[glycine-cleavage complex H protein] + CO2. Its function is as follows. The glycine cleavage system catalyzes the degradation of glycine. The P protein binds the alpha-amino group of glycine through its pyridoxal phosphate cofactor; CO(2) is released and the remaining methylamine moiety is then transferred to the lipoamide cofactor of the H protein. This chain is Glycine dehydrogenase (decarboxylating), found in Shigella sonnei (strain Ss046).